The following is an 82-amino-acid chain: Chaplin-E (82 aa).

An N-terminal signal peptide occupies residues 1–27 (MKNLKKAAAVTMVAGGLIAAGAGMASA). Residues 41–81 (SPGVASGNLVQAPIHIPVNAVGNSVNVIGVLNPAFGNLGVN) enclose the Chaplin domain.

Belongs to the chaplin family. Short chaplin subfamily.

Its subcellular location is the cell surface. It is found in the secreted. The protein localises to the cell wall. It localises to the fimbrium. Functionally, one of 8 partially redundant surface-active proteins required for efficient formation of aerial mycelium; the short chaplins assemble into a hydrophobic, amyloidal fibrillar surface layer that envelopes and protects aerial hyphae and spores, presumably anchored to the long chaplins. Chaplins have an overlapping function with the surface-active SapB peptide; chaplins are essential on minimal medium while on rich medium both chaplins and SapB are required for efficient aerial hyphae formation. Chaplins are also involved in cell attachment to a hydrophobic surface. Forms amyloid fibrils in vitro probably composed of stacked beta-sheets, at low extracellular concentrations individually restores the ability to form aerial hyphae to a chaplin-deficient strain, but does so less well than other short chaplins. A small chaplin extract (ChpD, ChpE, ChpF, ChpG and ChpH) self-assembles into 2 different amyloids; small fibrils at the air-water interface form an amphipathic membrane that resembles spore-surface structures involved in aerial hyphae formation, and hydrophilic fibrils in solution that resemble the fibers that attach cells to a hydrophobic surface. At the air-water interface the hydrophilic surface is in contact with water (probably equivalent to the peptidoglycan layer), while the hydrophobic face is exposed to the air, making the surface of the aerial hyphae hydrophobic. A minimal chaplin strain capable of forming aerial mycelium/hyphae on minimal medium contains ChpC, ChpE and ChpH. The strain also has restored rodlet formation on the hyphae surface. A second strain with ChpA, ChpD and ChpE makes slightly less robust hyphae. This essential chaplin may coordinate the assembly and/or polymerization of the other chaplins. A small chaplin extract applied to a chaplin-deficient strain restores aerial hyphae formation. The small chaplin extract forms an amyloid-like structure similar to that seen on the surface of cells without rodlets (rdlA-rdlB deletions), and is highly surface active, reducing surface tension from 72 to 26 mJ/m(2), which probably allows escape of hyphae from an aqueous environment into air. The sequence is that of Chaplin-E from Streptomyces coelicolor (strain ATCC BAA-471 / A3(2) / M145).